The chain runs to 379 residues: MSCPYAGNGNDHDDSAVPLTTEVGKIYGEYLMLDKLLDAQCMLSEEDKRPVHDEHLFIITHQAYELWFKQIIFEFDSIRDMLDAEVIDETKTLEIVKRLNRVVLILKLLVDQVPILETMTPLDFMDFRKYLAPASGFQSLQFRLIENKLGVLTEQRVRYNQKYSDVFSDEEARNSIRNSEKDPSLLELVQRWLERTPGLEESGFNFWAKFQESVDRFLEAQVQSAMMEPVEKAKNYRLMDIEKRREVYRSIFDPAVHDALVRRGDRRFSHRALQGAIMITFYRDEPRFSQPHQLLTLLMDIDSLITKWRYNHVIMVQRMIGSQQLGTGGSSGYQYLRSTLSDRYKVFLDLFNLSTFLIPREAIPPLDETIRRKLVHKSV.

Substrate-binding positions include 57–61 and R128; that span reads FIITH. H312 is a binding site for heme. T327 contacts substrate.

This sequence belongs to the tryptophan 2,3-dioxygenase family. As to quaternary structure, homotetramer. Dimer of dimers. The cofactor is heme.

It catalyses the reaction L-tryptophan + O2 = N-formyl-L-kynurenine. Its pathway is amino-acid degradation; L-tryptophan degradation via kynurenine pathway; L-kynurenine from L-tryptophan: step 1/2. It functions in the pathway pigment biosynthesis; ommochrome biosynthesis. Its function is as follows. Heme-dependent dioxygenase that catalyzes the oxidative cleavage of the L-tryptophan (L-Trp) pyrrole ring and converts L-tryptophan to N-formyl-L-kynurenine. Catalyzes the oxidative cleavage of the indole moiety. This is Tryptophan 2,3-dioxygenase from Drosophila erecta (Fruit fly).